We begin with the raw amino-acid sequence, 334 residues long: Protein translocase subunit SecF (334 aa).

6 helical membrane-spanning segments follow: residues Val18 to Gly38, Gly144 to Phe164, Phe168 to Phe190, Ser195 to Phe217, Ala258 to Ala278, and Phe279 to Ile299.

The protein belongs to the SecD/SecF family. SecF subfamily. Forms a complex with SecD. Part of the essential Sec protein translocation apparatus which comprises SecA, SecYEG and auxiliary proteins SecDF. Other proteins may also be involved.

Its subcellular location is the cell inner membrane. In terms of biological role, part of the Sec protein translocase complex. Interacts with the SecYEG preprotein conducting channel. SecDF uses the proton motive force (PMF) to complete protein translocation after the ATP-dependent function of SecA. This chain is Protein translocase subunit SecF, found in Gemmatimonas aurantiaca (strain DSM 14586 / JCM 11422 / NBRC 100505 / T-27).